The primary structure comprises 443 residues: tRNA-2-methylthio-N(6)-dimethylallyladenosine synthase (443 aa).

In terms of domain architecture, MTTase N-terminal spans 12–126 (KTFRVKSFGC…LPEMVADAAA (115 aa)). The [4Fe-4S] cluster site is built by C21, C57, C89, C162, C166, and C169. Residues 148 to 380 (RKSAPTAFLT…QAALNRDQLA (233 aa)) enclose the Radical SAM core domain. The 61-residue stretch at 383 to 443 (KASVGKTCEV…GPNSISGRLA (61 aa)) folds into the TRAM domain.

This sequence belongs to the methylthiotransferase family. MiaB subfamily. In terms of assembly, monomer. The cofactor is [4Fe-4S] cluster.

It is found in the cytoplasm. It catalyses the reaction N(6)-dimethylallyladenosine(37) in tRNA + (sulfur carrier)-SH + AH2 + 2 S-adenosyl-L-methionine = 2-methylsulfanyl-N(6)-dimethylallyladenosine(37) in tRNA + (sulfur carrier)-H + 5'-deoxyadenosine + L-methionine + A + S-adenosyl-L-homocysteine + 2 H(+). Functionally, catalyzes the methylthiolation of N6-(dimethylallyl)adenosine (i(6)A), leading to the formation of 2-methylthio-N6-(dimethylallyl)adenosine (ms(2)i(6)A) at position 37 in tRNAs that read codons beginning with uridine. This chain is tRNA-2-methylthio-N(6)-dimethylallyladenosine synthase, found in Novosphingobium aromaticivorans (strain ATCC 700278 / DSM 12444 / CCUG 56034 / CIP 105152 / NBRC 16084 / F199).